We begin with the raw amino-acid sequence, 492 residues long: B3 domain-containing protein REM3 (492 aa).

The segment at residues 12–104 is a DNA-binding region (TF-B3 1); it reads NRPFFVRSLA…VFHVTPSGRS (93 aa). The segment covering 105–116 has biased composition (low complexity); the sequence is FSQIRTSSSSGD. The segment at 105-134 is disordered; sequence FSQIRTSSSSGDYDSDDDDDEAGDDDSDSK. The span at 117–131 shows a compositional bias: acidic residues; sequence YDSDDDDDEAGDDDS. 2 consecutive DNA-binding regions (TF-B3) follow at residues 154-250 and 286-382; these read YCLL…LCFK and FLTV…FCSE. Residues 385-395 show a composition bias toward basic and acidic residues; that stretch reads IEQEEAPEERG. The disordered stretch occupies residues 385–427; it reads IEQEEAPEERGTPLPKRARVSAEVGHSRRTQAPNKSSDDPKIL.

It localises to the nucleus. This chain is B3 domain-containing protein REM3 (REM3), found in Arabidopsis thaliana (Mouse-ear cress).